The following is a 202-amino-acid chain: NADH-quinone oxidoreductase subunit J (202 aa).

The next 5 helical transmembrane spans lie at 3–23 (VFVF…LMVV), 31–51 (AVLW…LMGA), 53–73 (FVAM…FLFV), 93–113 (PVGG…LMVW), and 146–166 (LYLF…AILL).

It belongs to the complex I subunit 6 family. As to quaternary structure, NDH-1 is composed of 14 different subunits. Subunits NuoA, H, J, K, L, M, N constitute the membrane sector of the complex.

It is found in the cellular chromatophore membrane. The catalysed reaction is a quinone + NADH + 5 H(+)(in) = a quinol + NAD(+) + 4 H(+)(out). In terms of biological role, NDH-1 shuttles electrons from NADH, via FMN and iron-sulfur (Fe-S) centers, to quinones in the respiratory chain. The immediate electron acceptor for the enzyme in this species is believed to be ubiquinone. Couples the redox reaction to proton translocation (for every two electrons transferred, four hydrogen ions are translocated across the cytoplasmic membrane), and thus conserves the redox energy in a proton gradient. The polypeptide is NADH-quinone oxidoreductase subunit J (nuoJ) (Rhodobacter capsulatus (Rhodopseudomonas capsulata)).